The primary structure comprises 1502 residues: MFQSFFHNNGPAAAGETFSDSRSYPLTNHQEVPRNGLNELASSATKAQQQPTHILNSYPITGSNPLMRASAMGATSGSINPNMSNMNEHIRVSGMGTSKPLDLAGKYIDHLQHKDSNTPVLDERSYYNSGVDYNFSREKNGLGAFTPFEKQDVFNIPDEILHEFSTSQTKTDMGIFPELNRCWITIDNKLILWNINNDNEYQVVDDMKHTIQKVALVRPKPNTFVPAVKHLLLISTTMELFMFAISLDKATNELSVFNTHLSVPVQGIDVIDIVSHERSGRIFFAGQASGLNIWELHYSGSDDWFNSKCSKVCLTKSALLSLLPTNMLSQIPGVDFIQALFEDNSNGNGGFSQETITQLTIDQQRGIIYSLSSKSTIRAYVITEKSLEGPMSIEPAYISRIIGTTTARAAPILGPKYLKIVKISSVAPEENNNLFLVALTVGGVRLYFNGSMGRFNIEALRLESIKFPPSSVTPEVIQQELLHQQQEQAKRSFPFFSNLMSSEPVLLKFQKKSSVLLETTKASTIISPGIFFSAVIKSSQQTHQQEKKENSSVTGTTATAGSKTVKQQPVTLQHKLFVSVPDYGILKTHGKYVENATFLETAGPVQQIIPLSGLFNATTKPQGFANEFATQYTSETLRVAVLTSTSIEIYKYRTPDEIFEDLIDNPLPFVLNYGAAEACSTALFVTCKSNKSEKLRSNALTFLTMGIPGVVDIKPVYNRYSVSTVSSLLSKPTLSTATTNLQQSITGFSKPSPANKEDFDLDDVILSPRFYGIALLITRLLRDIWGRHVFMTFTDNRVTSHAFISSSDPITPSINNLKSDEISQNRNIISKVSISKDCIEYYLSSINILNEFFITYGDSISQISAPYVLANNSNGRVIDKTEEVANQAESIAINAMIKMVQSIKEGLSFLNVLYEESEVEGFDNQYLGFKDIISFVSLDVQKDLVKLDFKDLFAPNDKTKSLIREILLSIINRNITKGASIEYTATALQERCGSFCSASDILGFRAIEHLRRAKEIGLRNYDSLNYHLKNATALLEQIVDDLSIEKLKEAVSMMLSVNYYPKSIEFLLNIANSMDKGKLACQYVANGFLENDDRKQYYDKRILVYDLVFDTLIKVDELAEKKQSSKTQNQISISNDDEVKLRQKSYEAALKYNDRLFHYHMYDWLVSQNREEKLLDIETPFILPYLMEKAGSSLKISNILWVYYSRRSKFFESAEILYRLATSNFDITLFERIEFLSRANGFCNSVSPLSQKQRIVQLASRIQDACEVAGIQGDILSLVYTDARIDSAIKDELIKTLDGKILSTSELFNDFAVPLSYHEIALFIFKIADFRDHEVIMAKWDELFQSLRMEFNNTGKKEDSMNFINLLSNVLIKIGKNVQDSEFIFPIFELFPIVCNFFYETLPKEHIVSGSIVSIFITAGVSFNKMYYILKELIETSDSDNSVFNKEMTWLIHEWYKSDRKFRDIISYNDIIHLKEYKIDNDPIEKYVKNSGNNLGICFYKE.

The interval 1-31 (MFQSFFHNNGPAAAGETFSDSRSYPLTNHQE) is disordered. Residues 18–30 (FSDSRSYPLTNHQ) are compositionally biased toward polar residues. The interval 233–261 (LISTTMELFMFAISLDKATNELSVFNTHL) is leucine-zipper. Ser-1247 bears the Phosphoserine mark.

It belongs to the non-repetitive/WGA-negative nucleoporin family. In terms of assembly, component of the nuclear pore complex (NPC). NPC constitutes the exclusive means of nucleocytoplasmic transport. NPCs allow the passive diffusion of ions and small molecules and the active, nuclear transport receptor-mediated bidirectional transport of macromolecules such as proteins, RNAs, ribonucleoparticles (RNPs), and ribosomal subunits across the nuclear envelope. Due to its 8-fold rotational symmetry, all subunits are present with 8 copies or multiples thereof. During mitosis NUP53 changes its binding partner within the NPC from NUP170 to NIC96, exposing a high affinity binding site for the karyopherin PSE1, and retaining it in the NPC.

Its subcellular location is the nucleus. The protein resides in the nuclear pore complex. It localises to the nucleus membrane. In terms of biological role, functions as a component of the nuclear pore complex (NPC). NPC components, collectively referred to as nucleoporins (NUPs), can play the role of both NPC structural components and of docking or interaction partners for transiently associated nuclear transport factors. NUP170 probably plays an important role in NPC assembly and organization. In addition it is required for chromosome transmission fidelity. This chain is Nucleoporin NUP170 (NUP170), found in Saccharomyces cerevisiae (strain ATCC 204508 / S288c) (Baker's yeast).